The chain runs to 430 residues: Histidine--tRNA ligase (430 aa).

The protein belongs to the class-II aminoacyl-tRNA synthetase family.

The protein resides in the cytoplasm. It catalyses the reaction tRNA(His) + L-histidine + ATP = L-histidyl-tRNA(His) + AMP + diphosphate + H(+). This chain is Histidine--tRNA ligase, found in Metallosphaera sedula (strain ATCC 51363 / DSM 5348 / JCM 9185 / NBRC 15509 / TH2).